A 513-amino-acid polypeptide reads, in one-letter code: ATP synthase subunit alpha (513 aa).

ATP is bound at residue 169–176 (GDRQTGKT).

It belongs to the ATPase alpha/beta chains family. In terms of assembly, F-type ATPases have 2 components, CF(1) - the catalytic core - and CF(0) - the membrane proton channel. CF(1) has five subunits: alpha(3), beta(3), gamma(1), delta(1), epsilon(1). CF(0) has three main subunits: a(1), b(2) and c(9-12). The alpha and beta chains form an alternating ring which encloses part of the gamma chain. CF(1) is attached to CF(0) by a central stalk formed by the gamma and epsilon chains, while a peripheral stalk is formed by the delta and b chains.

The protein resides in the cell inner membrane. It carries out the reaction ATP + H2O + 4 H(+)(in) = ADP + phosphate + 5 H(+)(out). Functionally, produces ATP from ADP in the presence of a proton gradient across the membrane. The alpha chain is a regulatory subunit. The polypeptide is ATP synthase subunit alpha (Histophilus somni (strain 2336) (Haemophilus somnus)).